A 326-amino-acid chain; its full sequence is Beta-ketoacyl-[acyl-carrier-protein] synthase III (326 aa).

Residues cysteine 112 and histidine 251 contribute to the active site. The tract at residues 252-256 is ACP-binding; the sequence is QANSR. The active site involves asparagine 281.

Belongs to the thiolase-like superfamily. FabH family. As to quaternary structure, homodimer.

It localises to the cytoplasm. It catalyses the reaction malonyl-[ACP] + acetyl-CoA + H(+) = 3-oxobutanoyl-[ACP] + CO2 + CoA. The protein operates within lipid metabolism; fatty acid biosynthesis. Catalyzes the condensation reaction of fatty acid synthesis by the addition to an acyl acceptor of two carbons from malonyl-ACP. Catalyzes the first condensation reaction which initiates fatty acid synthesis and may therefore play a role in governing the total rate of fatty acid production. Possesses both acetoacetyl-ACP synthase and acetyl transacylase activities. Its substrate specificity determines the biosynthesis of branched-chain and/or straight-chain of fatty acids. The sequence is that of Beta-ketoacyl-[acyl-carrier-protein] synthase III from Clostridium botulinum (strain Loch Maree / Type A3).